We begin with the raw amino-acid sequence, 490 residues long: GTPase Der (490 aa).

EngA-type G domains lie at 3–166 (PVVA…MEDL) and 203–376 (IKLA…DSST). GTP-binding positions include 9 to 16 (GRPNVGKS), 56 to 60 (DTGGI), 118 to 121 (NKTD), 209 to 216 (GRPNVGKS), 256 to 260 (DTAGV), and 321 to 324 (NKWD). The KH-like domain maps to 377–461 (RRVGTSMLTR…PIRIQFKEGE (85 aa)).

The protein belongs to the TRAFAC class TrmE-Era-EngA-EngB-Septin-like GTPase superfamily. EngA (Der) GTPase family. As to quaternary structure, associates with the 50S ribosomal subunit.

GTPase that plays an essential role in the late steps of ribosome biogenesis. This chain is GTPase Der, found in Escherichia coli O127:H6 (strain E2348/69 / EPEC).